The chain runs to 200 residues: Dephospho-CoA kinase (200 aa).

Residues 3–200 (KVGLTGGIGS…EELQRRLHSR (198 aa)) enclose the DPCK domain. Residue 11–16 (GSGKSS) participates in ATP binding.

This sequence belongs to the CoaE family.

The protein localises to the cytoplasm. The enzyme catalyses 3'-dephospho-CoA + ATP = ADP + CoA + H(+). It participates in cofactor biosynthesis; coenzyme A biosynthesis; CoA from (R)-pantothenate: step 5/5. Functionally, catalyzes the phosphorylation of the 3'-hydroxyl group of dephosphocoenzyme A to form coenzyme A. The sequence is that of Dephospho-CoA kinase from Thermobifida fusca (strain YX).